A 558-amino-acid polypeptide reads, in one-letter code: Glucose-6-phosphate isomerase (558 aa).

The active-site Proton donor is the Glu-362. Catalysis depends on residues His-393 and Lys-523.

Belongs to the GPI family.

It is found in the cytoplasm. It carries out the reaction alpha-D-glucose 6-phosphate = beta-D-fructose 6-phosphate. It functions in the pathway carbohydrate degradation; glycolysis; D-glyceraldehyde 3-phosphate and glycerone phosphate from D-glucose: step 2/4. The protein is Glucose-6-phosphate isomerase (Pgi) of Drosophila melanogaster (Fruit fly).